We begin with the raw amino-acid sequence, 480 residues long: MDGALMEGPLFLQSQRFGTKRWKKTWAVLYPASPHGVARLEFFDHKGSSSGGGRGGSRRLDCKMIRLAECVSVVPVTVESPPEPGASAFRLDTAQRSHLLAADAASSTAWVQILCRTAFPKGGWALAQTENPPKFSALEMLENSLYSPTWEGSQFWVTSQKTEASERCGLQGSYVLRVEAEKLTLLTLGAQSQILEPLLFWPYTLLRRYGRDKVMFSFEAGRRCPSGPGTFTFQTAQGNDIFQAVEAAIQQQKAQGKVGQGQDITRTDSHDGETEGKMAPTPVPQEPLGSPPALYAEPLDSLRIPPGPSQDSLYSDPLGSTPAGAGEGVQRKKPLYWDLYGHVQQQLLKTKLIDSKEDPIYDEPEGLAPAPLRGLYDLPQEPKDAWWCQARLKEEGYELPYNPATDDYAVPPPRSSKPTPAPKPQGLILPESGTTAGSGSKGSDTALYSQVQKSGTPGRWDCGLSRVGNDRVGVKSEGST.

The residue at position 1 (Met1) is an N-acetylmethionine. The PH domain occupies Gly3–Phe119. Ser48 is modified (phosphoserine). In terms of domain architecture, IRS-type PTB spans Glu151 to Gly259. Residues Lys253–Gln262 show a composition bias toward low complexity. Residues Lys253–Gly328 are disordered. Basic and acidic residues predominate over residues Thr265 to Gly276. 2 positions are modified to phosphoserine: Ser269 and Ser290. Tyr295, Tyr336, and Tyr340 each carry phosphotyrosine. Tyr361 is modified (phosphotyrosine; by INSR). Tyr376 is modified (phosphotyrosine). Tyr397 is subject to Phosphotyrosine; by INSR. The interval Glu398–Thr480 is disordered. Tyr408 is modified (phosphotyrosine). Positions Val410–Lys423 are enriched in pro residues. The residue at position 415 (Ser415) is a Phosphoserine. A compositionally biased stretch (low complexity) spans Ser432–Thr445. The segment covering Ala446–Gly455 has biased composition (polar residues). Tyr448 carries the post-translational modification Phosphotyrosine.

It belongs to the DOK family. Type A subfamily. As to quaternary structure, interacts with RasGAP and INPP5D/SHIP1. Interacts directly with phosphorylated ITGB3. Interacts with SRMS (via the SH2 and SH3 domains). In terms of processing, constitutively tyrosine-phosphorylated. Phosphorylated by TEC. Phosphorylated by LYN. Phosphorylated on tyrosine residues by the insulin receptor kinase. Results in the negative regulation of the insulin signaling pathway. Phosphorylated on tyrosine residues by SRMS.

The protein resides in the cytoplasm. It is found in the nucleus. In terms of biological role, DOK proteins are enzymatically inert adaptor or scaffolding proteins. They provide a docking platform for the assembly of multimolecular signaling complexes. DOK1 appears to be a negative regulator of the insulin signaling pathway. Modulates integrin activation by competing with talin for the same binding site on ITGB3. The protein is Docking protein 1 (Dok1) of Rattus norvegicus (Rat).